A 76-amino-acid chain; its full sequence is uncharacterized protein (76 aa).

This is an uncharacterized protein from Sulfolobus islandicus rod-shaped virus 1 (SIRV-1).